The chain runs to 350 residues: Ookinete surface protein PIMMS43 (350 aa).

Positions 1–24 (MIKLCTFLSLFLIFFFLNLNAING) are cleaved as a signal peptide. The helical transmembrane segment at 330–350 (NSIASKLMSVFVFIAVIIYIL) threads the bilayer.

In terms of assembly, forms multimers, perhaps with an unknown protein(s).

Its subcellular location is the membrane. Involved in ookinete evasion of the mosquito complement-like response, oocyst maturation, sporozoite development and infectivity. The polypeptide is Ookinete surface protein PIMMS43 (Plasmodium berghei (strain Anka)).